The primary structure comprises 202 residues: Orotate phosphoribosyltransferase (202 aa).

113-121 (EDIITTGGS) lines the 5-phospho-alpha-D-ribose 1-diphosphate pocket. Orotate is bound by residues threonine 117 and arginine 145.

It belongs to the purine/pyrimidine phosphoribosyltransferase family. PyrE subfamily. As to quaternary structure, homodimer. Requires Mg(2+) as cofactor.

The enzyme catalyses orotidine 5'-phosphate + diphosphate = orotate + 5-phospho-alpha-D-ribose 1-diphosphate. Its pathway is pyrimidine metabolism; UMP biosynthesis via de novo pathway; UMP from orotate: step 1/2. Its function is as follows. Catalyzes the transfer of a ribosyl phosphate group from 5-phosphoribose 1-diphosphate to orotate, leading to the formation of orotidine monophosphate (OMP). This chain is Orotate phosphoribosyltransferase, found in Campylobacter lari (strain RM2100 / D67 / ATCC BAA-1060).